A 68-amino-acid polypeptide reads, in one-letter code: Large ribosomal subunit protein bL31 (68 aa).

Zn(2+) contacts are provided by cysteine 16, cysteine 18, cysteine 36, and cysteine 39.

This sequence belongs to the bacterial ribosomal protein bL31 family. Type A subfamily. As to quaternary structure, part of the 50S ribosomal subunit. It depends on Zn(2+) as a cofactor.

In terms of biological role, binds the 23S rRNA. This is Large ribosomal subunit protein bL31 from Dictyoglomus thermophilum (strain ATCC 35947 / DSM 3960 / H-6-12).